A 362-amino-acid chain; its full sequence is Aminomethyltransferase (362 aa).

This sequence belongs to the GcvT family. In terms of assembly, the glycine cleavage system is composed of four proteins: P, T, L and H.

The enzyme catalyses N(6)-[(R)-S(8)-aminomethyldihydrolipoyl]-L-lysyl-[protein] + (6S)-5,6,7,8-tetrahydrofolate = N(6)-[(R)-dihydrolipoyl]-L-lysyl-[protein] + (6R)-5,10-methylene-5,6,7,8-tetrahydrofolate + NH4(+). In terms of biological role, the glycine cleavage system catalyzes the degradation of glycine. This chain is Aminomethyltransferase, found in Listeria monocytogenes serotype 4b (strain F2365).